Reading from the N-terminus, the 1072-residue chain is Integrator complex subunit 3 homolog (1072 aa).

2 disordered regions span residues 920-943 (YPSS…STPS) and 1002-1072 (DTTV…NDSD). A phosphoserine mark is found at Ser-1042, Ser-1043, Ser-1047, and Ser-1048.

This sequence belongs to the Integrator subunit 3 family. As to quaternary structure, belongs to the multiprotein complex Integrator, at least composed of IntS1, IntS2, IntS3, IntS4, omd/IntS5, IntS6, defl/IntS7, IntS8, IntS9, IntS10, IntS11, IntS12, asun/IntS13, IntS14 and IntS15. The core complex associates with protein phosphatase 2A subunits mts/PP2A and Pp2A-29B, to form the Integrator-PP2A (INTAC) complex.

It is found in the nucleus. Its subcellular location is the cytoplasm. Functionally, component of the integrator complex, a multiprotein complex that terminates RNA polymerase II (Pol II) transcription in the promoter-proximal region of genes. The integrator complex provides a quality checkpoint during transcription elongation by driving premature transcription termination of transcripts that are unfavorably configured for transcriptional elongation: the complex terminates transcription by (1) catalyzing dephosphorylation of the C-terminal domain (CTD) of Pol II subunit Polr2A/Rbp1 and Spt5, and (2) degrading the exiting nascent RNA transcript via endonuclease activity. The integrator complex is also involved in the 3'-end processing of the U7 snRNA, and also the spliceosomal snRNAs U1, U2, U4 and U5. In Drosophila yakuba (Fruit fly), this protein is Integrator complex subunit 3 homolog (IntS3).